Reading from the N-terminus, the 522-residue chain is Glutathione reductase, mitochondrial (522 aa).

The transit peptide at 1 to 43 (MALLPRALSAGAGPSWRRAARAFRGFLLLLPEPAALTRALSRA) directs the protein to the mitochondrion. 2 residues coordinate FAD: serine 74 and glycine 75. Position 74 (serine 74) interacts with glutathione. Arginine 81 is a binding site for glutathione. Glutamate 94 is an FAD binding site. N6-acetyllysine is present on lysine 97. The FAD site is built by threonine 101, cysteine 102, and lysine 110. A disulfide bridge connects residues cysteine 102 and cysteine 107. Glutathione is bound at residue tyrosine 158. Alanine 174 is an FAD binding site. Residues alanine 239, isoleucine 242, glutamate 245, arginine 262, arginine 268, and glycine 334 each coordinate NADP(+). Aspartate 375 lines the FAD pocket. Leucine 381 lines the NADP(+) pocket. Threonine 383 is an FAD binding site. Residue arginine 391 participates in glutathione binding. Position 414 (valine 414) interacts with NADP(+). Histidine 511 is an FAD binding site. Residue histidine 511 is the Proton acceptor of the active site.

The protein belongs to the class-I pyridine nucleotide-disulfide oxidoreductase family. In terms of assembly, homodimer; disulfide-linked. The cofactor is FAD.

The protein resides in the mitochondrion. The protein localises to the cytoplasm. The catalysed reaction is 2 glutathione + NADP(+) = glutathione disulfide + NADPH + H(+). Catalyzes the reduction of glutathione disulfide (GSSG) to reduced glutathione (GSH). Constitutes the major mechanism to maintain a high GSH:GSSG ratio in the cytosol. The chain is Glutathione reductase, mitochondrial (GSR) from Homo sapiens (Human).